We begin with the raw amino-acid sequence, 433 residues long: Steroid hormone receptor ERR2 (433 aa).

The disordered stretch occupies residues 1 to 41 (MSSEDRHLGSSCGSFIKTEPSSPSSGIDALSHHSPSGSSDA). The span at 32-41 (HHSPSGSSDA) shows a compositional bias: low complexity. The tract at residues 93–211 (YMLNAIPKRL…SPPAKKPLTK (119 aa)) is interaction with NANOG. The segment at residues 100–186 (KRLCLVCGDI…RVRGGRQKYK (87 aa)) is a DNA-binding region (nuclear receptor). 2 consecutive NR C4-type zinc fingers follow at residues 103 to 123 (CLVC…CEAC) and 139 to 163 (CPAT…FMKC). The tract at residues 203 to 433 (PPAKKPLTKI…LFLEMLEAKV (231 aa)) is essential for ESRRB transcriptional activity and interaction with NCOA3. In terms of domain architecture, NR LBD spans 208-432 (PLTKIVSYLL…KLFLEMLEAK (225 aa)).

It belongs to the nuclear hormone receptor family. NR3 subfamily. Binds DNA as a monomer. Interacts with NR0B1; represses ESRRB activity at the GATA6 promoter. Interacts with NANOG; reciprocally modulates their transcriptional activities and activates POU5F1 expression. Interacts with NCOA3; mediates the interaction between ESRRB and RNA polymerase II complexes and allows NCOA3 corecruitment to ESRRB, KLF4, NANOG, and SOX2 enhancer regions to trigger ESRRB-dependent gene activation involved in self-renewal and pluripotency. Interacts with KDM1A; co-occupes the core set of ESRRB targets including ELF5 and EOMES. Interacts with the multiprotein complex Integrator, at least composed of INTS1, INTS2, INTS3, INTS4, INTS5, INTS6, INTS7, INTS8, INTS9/RC74, INTS10, INTS11/CPSF3L and INTS12; ESRRB is probably not a core component of the integrator complex and associates to integrator via its interaction with INTS1 and INTS9; attracts the transcriptional machinery. Interacts with JARID2. Interacts with POU5F1; recruits ESRRB near the POU5F1-SOX2 element in the NANOG proximal promoter leading to activation of NANOG expression; the interaction is DNA independent. Acetylated by PCAF/KAT2 (in vitro).

It localises to the nucleus. It is found in the cytoplasm. Its subcellular location is the chromosome. Transcription factor that binds a canonical ESRRB recognition (ERRE) sequence 5'TCAAGGTCA-3' localized on promoter and enhancer of targets genes regulating their expression or their transcription activity. Plays a role, in a LIF independent manner, in maintainance of self-renewal and pluripotency of embryonic and trophoblast stem cells through different signaling pathways including FGF signaling pathway and Wnt signaling pathways. Involved in morula development (2-16 cells embryos) by acting as a regulator at the 8-cell stage. Upon FGF signaling pathway activation, interacts with KDM1A by directly binding to enhancer site of ELF5 and EOMES and activating their transcription leading to self-renewal of trophoblast stem cells. Also regulates expression of multiple rod-specific genes and is required for survival of this cell type. Plays a role as transcription factor activator of GATA6, NR0B1, POU5F1 and PERM1. Plays a role as transcription factor repressor of NFE2L2 transcriptional activity and ESR1 transcriptional activity. During mitosis remains bound to a subset of interphase target genes, including pluripotency regulators, through the canonical ESRRB recognition (ERRE) sequence, leading to their transcriptional activation in early G1 phase. Can coassemble on structured DNA elements with other transcription factors like SOX2, POU5F1, KDM1A and NCOA3 to trigger ESRRB-dependent gene activation. This mechanism, in the case of SOX2 corecruitment prevents the embryonic stem cells (ESCs) to epiblast stem cells (EpiSC) transition through positive regulation of NR0B1 that inhibits the EpiSC transcriptional program. Also plays a role inner ear development by controlling expression of ion channels and transporters and in early placentation. The protein is Steroid hormone receptor ERR2 of Rattus norvegicus (Rat).